A 131-amino-acid chain; its full sequence is Large ribosomal subunit protein bL17 (131 aa).

It belongs to the bacterial ribosomal protein bL17 family. Part of the 50S ribosomal subunit. Contacts protein L32.

The sequence is that of Large ribosomal subunit protein bL17 from Herminiimonas arsenicoxydans.